A 667-amino-acid chain; its full sequence is Bifunctional polymyxin resistance protein ArnA (667 aa).

The segment at 1 to 304 (MKAIVFAYHD…EMGIVTDVRL (304 aa)) is formyltransferase ArnAFT. Histidine 104 functions as the Proton donor; for formyltransferase activity in the catalytic mechanism. (6R)-10-formyltetrahydrofolate-binding positions include arginine 114 and 136–140 (VKKAD). Residues 314-667 (RRTRVLILGV…TAAPKDELNA (354 aa)) form a dehydrogenase ArnADH region. NAD(+)-binding positions include aspartate 347 and 368–369 (DI). UDP-alpha-D-glucuronate contacts are provided by residues alanine 393, tyrosine 398, and 432-433 (TS). Glutamate 434 serves as the catalytic Proton acceptor; for decarboxylase activity. Residues arginine 460, asparagine 492, 526-535 (KLVDGGAQKR), and tyrosine 613 contribute to the UDP-alpha-D-glucuronate site. The active-site Proton donor; for decarboxylase activity is the arginine 619.

It in the N-terminal section; belongs to the Fmt family. UDP-L-Ara4N formyltransferase subfamily. In the C-terminal section; belongs to the NAD(P)-dependent epimerase/dehydratase family. UDP-glucuronic acid decarboxylase subfamily. In terms of assembly, homohexamer, formed by a dimer of trimers.

It catalyses the reaction UDP-alpha-D-glucuronate + NAD(+) = UDP-beta-L-threo-pentopyranos-4-ulose + CO2 + NADH. The enzyme catalyses UDP-4-amino-4-deoxy-beta-L-arabinose + (6R)-10-formyltetrahydrofolate = UDP-4-deoxy-4-formamido-beta-L-arabinose + (6S)-5,6,7,8-tetrahydrofolate + H(+). The protein operates within nucleotide-sugar biosynthesis; UDP-4-deoxy-4-formamido-beta-L-arabinose biosynthesis; UDP-4-deoxy-4-formamido-beta-L-arabinose from UDP-alpha-D-glucuronate: step 1/3. Its pathway is nucleotide-sugar biosynthesis; UDP-4-deoxy-4-formamido-beta-L-arabinose biosynthesis; UDP-4-deoxy-4-formamido-beta-L-arabinose from UDP-alpha-D-glucuronate: step 3/3. It participates in bacterial outer membrane biogenesis; lipopolysaccharide biosynthesis. In terms of biological role, bifunctional enzyme that catalyzes the oxidative decarboxylation of UDP-glucuronic acid (UDP-GlcUA) to UDP-4-keto-arabinose (UDP-Ara4O) and the addition of a formyl group to UDP-4-amino-4-deoxy-L-arabinose (UDP-L-Ara4N) to form UDP-L-4-formamido-arabinose (UDP-L-Ara4FN). The modified arabinose is attached to lipid A and is required for resistance to polymyxin and cationic antimicrobial peptides. The protein is Bifunctional polymyxin resistance protein ArnA of Yersinia pseudotuberculosis serotype O:3 (strain YPIII).